Consider the following 2026-residue polypeptide: E3 ubiquitin-protein ligase TRIP12 (2026 aa).

Polar residues-rich tracts occupy residues 1–10 (MSNRPNSNPG), 32–42 (GRNSLSLSVGS), and 73–84 (SSVSEPNITFSP). The tract at residues 1-437 (MSNRPNSNPG…SGESESDDSE (437 aa)) is disordered. Composition is skewed to low complexity over residues 94 to 112 (SSHF…AISP), 135 to 161 (AEPA…STPS), 171 to 188 (LLSS…SAAG), and 199 to 241 (AAKP…SSAA). Residues 359 to 371 (QKTTGSCASTSRR) show a composition bias toward polar residues. The segment covering 379–391 (GAAEARRQEKMAD) has biased composition (basic and acidic residues). Positions 392-404 (SDNNQDGANSSAA) are enriched in polar residues. Low complexity predominate over residues 412–430 (GASASSSVAGAVGMTTSGE). A WWE domain is found at 789–876 (MLKKGSAQTT…DPELAKCFIK (88 aa)). Disordered regions lie at residues 1008–1123 (SNVT…SVSN) and 1441–1470 (GCKD…KQDE). Positions 1040–1053 (KRKRLPKRGPRRPK) are enriched in basic residues. A compositionally biased stretch (basic and acidic residues) spans 1056–1065 (PPRDDDKVDN). Positions 1068 to 1079 (KSPTTTQSPKSS) are enriched in low complexity. A compositionally biased stretch (polar residues) spans 1094–1104 (TQANSANSEPS). A K-box region spans residues 1530–1604 (EIIPTGEFIN…AMQRLLDTNP (75 aa)). In terms of domain architecture, HECT spans 1919–2026 (PDHGYTHDSR…REGQQSFHLS (108 aa)). The Glycyl thioester intermediate role is filled by cysteine 1993.

The protein belongs to the UPL family. K-HECT subfamily.

The protein localises to the nucleus. Its subcellular location is the nucleoplasm. The catalysed reaction is S-ubiquitinyl-[E2 ubiquitin-conjugating enzyme]-L-cysteine + [acceptor protein]-L-lysine = [E2 ubiquitin-conjugating enzyme]-L-cysteine + N(6)-ubiquitinyl-[acceptor protein]-L-lysine.. Its pathway is protein modification; protein ubiquitination. Functionally, E3 ubiquitin-protein ligase involved in ubiquitin fusion degradation (UFD) pathway and regulation of DNA repair. Part of the ubiquitin fusion degradation (UFD) pathway, a process that mediates ubiquitination of protein at their N-terminus, regardless of the presence of lysine residues in target proteins. Acts as a key regulator of DNA damage response by acting as a suppressor of RNF168, an E3 ubiquitin-protein ligase that promotes accumulation of 'Lys-63'-linked histone H2A and H2AX at DNA damage sites, thereby acting as a guard against excessive spreading of ubiquitinated chromatin at damaged chromosomes. The sequence is that of E3 ubiquitin-protein ligase TRIP12 (trip12) from Danio rerio (Zebrafish).